Reading from the N-terminus, the 350-residue chain is Protein Wnt-2 (350 aa).

An N-terminal signal peptide occupies residues methionine 1 to alanine 25. Cystine bridges form between cysteine 74/cysteine 85, cysteine 125/cysteine 133, cysteine 135/cysteine 155, cysteine 204/cysteine 218, cysteine 206/cysteine 213, cysteine 276/cysteine 307, cysteine 292/cysteine 302, cysteine 306/cysteine 346, cysteine 322/cysteine 337, cysteine 324/cysteine 334, and cysteine 329/cysteine 330. Asparagine 132 carries an N-linked (GlcNAc...) asparagine glycan. Residue serine 210 is the site of O-palmitoleoyl serine; by PORCN attachment. An N-linked (GlcNAc...) asparagine glycan is attached at asparagine 293.

This sequence belongs to the Wnt family. Post-translationally, palmitoleoylation is required for efficient binding to frizzled receptors. Depalmitoleoylation leads to Wnt signaling pathway inhibition.

It is found in the secreted. Its subcellular location is the extracellular space. It localises to the extracellular matrix. Functionally, ligand for members of the frizzled family of seven transmembrane receptors. Functions in the canonical Wnt signaling pathway that results in activation of transcription factors of the TCF/LEF family. The chain is Protein Wnt-2 (wnt2) from Danio rerio (Zebrafish).